The sequence spans 357 residues: MLKLVIIENMAEIMLFSLDLLLFSTDILCFNFPSKMIKLPGFITIQIFFYPQASFGISANTILFLFHIFTFVFSHRSKSIDMIISHLSLIHILLLFTQAILVSLDFFGSQNTQDDLRCKVIVFLNKVMRGLSICTPCLLNVLQAIISPSIFSLAKLKHPSASHILGFFLFSWVLNMFIGVIFCCTLWLPPVKWGQSSVCHTALFLFAHELHPQETVFHTNDFEGCHLYRVHGPLKRLHGDYFIQTIRGYLSAFTQPACPPVSPVKRASQTILLLVSFVFIYWVDFMFSFSRGVTWINDSLLVWFQVIVANSYATISPLMLIYADNQIFKTLQMLWFKYLSPPKLMLKFNRQCGSTKK.

Residues 1–3 (MLK) lie on the Extracellular side of the membrane. A helical transmembrane segment spans residues 4-24 (LVIIENMAEIMLFSLDLLLFS). The Cytoplasmic segment spans residues 25 to 52 (TDILCFNFPSKMIKLPGFITIQIFFYPQ). The chain crosses the membrane as a helical span at residues 53–73 (ASFGISANTILFLFHIFTFVF). Over 74-81 (SHRSKSID) the chain is Extracellular. A helical membrane pass occupies residues 82-102 (MIISHLSLIHILLLFTQAILV). Residues 103–130 (SLDFFGSQNTQDDLRCKVIVFLNKVMRG) lie on the Cytoplasmic side of the membrane. Residues 131 to 151 (LSICTPCLLNVLQAIISPSIF) traverse the membrane as a helical segment. The Extracellular portion of the chain corresponds to 152–163 (SLAKLKHPSASH). A helical membrane pass occupies residues 164–184 (ILGFFLFSWVLNMFIGVIFCC). The Cytoplasmic segment spans residues 185–269 (TLWLPPVKWG…PVSPVKRASQ (85 aa)). A helical transmembrane segment spans residues 270 to 290 (TILLLVSFVFIYWVDFMFSFS). The Extracellular portion of the chain corresponds to 291-300 (RGVTWINDSL). Asparagine 297 carries an N-linked (GlcNAc...) asparagine glycan. A helical transmembrane segment spans residues 301 to 321 (LVWFQVIVANSYATISPLMLI). Residues 322–357 (YADNQIFKTLQMLWFKYLSPPKLMLKFNRQCGSTKK) are Cytoplasmic-facing.

This sequence belongs to the G-protein coupled receptor 1 family.

Its subcellular location is the cell membrane. In terms of biological role, putative pheromone receptor. This chain is Vomeronasal type-1 receptor 5 (VN1R5), found in Gorilla gorilla gorilla (Western lowland gorilla).